The chain runs to 496 residues: Lysine--tRNA ligase (496 aa).

The Mg(2+) site is built by glutamate 409 and glutamate 416.

Belongs to the class-II aminoacyl-tRNA synthetase family. In terms of assembly, homodimer. Requires Mg(2+) as cofactor.

It is found in the cytoplasm. The catalysed reaction is tRNA(Lys) + L-lysine + ATP = L-lysyl-tRNA(Lys) + AMP + diphosphate. The chain is Lysine--tRNA ligase from Streptococcus agalactiae serotype III (strain NEM316).